The following is a 200-amino-acid chain: Dephospho-CoA kinase (200 aa).

Residues 3 to 200 (RIGLTGGIGS…LIAEILTRIK (198 aa)) form the DPCK domain. 11 to 16 (GSGKST) lines the ATP pocket.

This sequence belongs to the CoaE family.

It is found in the cytoplasm. It catalyses the reaction 3'-dephospho-CoA + ATP = ADP + CoA + H(+). It participates in cofactor biosynthesis; coenzyme A biosynthesis; CoA from (R)-pantothenate: step 5/5. Its function is as follows. Catalyzes the phosphorylation of the 3'-hydroxyl group of dephosphocoenzyme A to form coenzyme A. This Corynebacterium efficiens (strain DSM 44549 / YS-314 / AJ 12310 / JCM 11189 / NBRC 100395) protein is Dephospho-CoA kinase.